The chain runs to 311 residues: Pyrimidine-specific ribonucleoside hydrolase RihA (311 aa).

The active site involves His240.

It belongs to the IUNH family. RihA subfamily.

Its function is as follows. Hydrolyzes cytidine or uridine to ribose and cytosine or uracil, respectively. This Salmonella paratyphi C (strain RKS4594) protein is Pyrimidine-specific ribonucleoside hydrolase RihA.